Reading from the N-terminus, the 319-residue chain is Myoblast determination protein 1 (319 aa).

Met-1 participates in a covalent cross-link: Peptide (Met-Gly) (interchain with G-Cter in ubiquitin). Lys-104 is modified (N6-methyllysine; by EHMT2). Residues 109–160 (DRRKAATMRERRRLSKVNEAFETLKRCTSSNPNQRLPKVEILRNAIRYIEGL) enclose the bHLH domain. Disordered regions lie at residues 174–221 (AAAA…SGAR) and 266–319 (APAL…YQVL). 2 stretches are compositionally biased toward polar residues: residues 197–207 (SDASSPRSNCS) and 308–319 (ASANPNPIYQVL).

In terms of assembly, efficient DNA binding requires dimerization with another bHLH protein. Seems to form active heterodimers with ITF-2. Interacts with SUV39H1. Interacts with DDX5. Interacts with CHD2. Interacts with TSC22D3. Interacts with SETD3. Interacts with P-TEFB complex; promotes the transcriptional activity of MYOD1 through its CDK9-mediated phosphorylation. Interacts with CSRP3. Interacts with NUPR1. Phosphorylated by CDK9. This phosphorylation promotes its function in muscle differentiation. In terms of processing, acetylated by a complex containing EP300 and PCAF. The acetylation is essential to activate target genes. Conversely, its deacetylation by SIRT1 inhibits its function. Post-translationally, ubiquitinated on the N-terminus; which is required for proteasomal degradation. Methylation at Lys-104 by EHMT2/G9a inhibits myogenic activity.

Its subcellular location is the nucleus. Functionally, acts as a transcriptional activator that promotes transcription of muscle-specific target genes and plays a role in muscle differentiation. Together with MYF5 and MYOG, co-occupies muscle-specific gene promoter core region during myogenesis. Induces fibroblasts to differentiate into myoblasts. Interacts with and is inhibited by the twist protein. This interaction probably involves the basic domains of both proteins. This Sus scrofa (Pig) protein is Myoblast determination protein 1 (MYOD1).